Consider the following 99-residue polypeptide: Ferredoxin-2 (99 aa).

In terms of domain architecture, 2Fe-2S ferredoxin-type spans 4–96; that stretch reads YQVRLINKKR…DCTIRTHQEA (93 aa). [2Fe-2S] cluster contacts are provided by Cys42, Cys47, Cys50, and Cys80.

The protein belongs to the 2Fe2S plant-type ferredoxin family. Requires [2Fe-2S] cluster as cofactor.

Ferredoxins are iron-sulfur proteins that transfer electrons in a wide variety of metabolic reactions. Donates electrons to the nitrogenase. This is Ferredoxin-2 (fdxH) from Leptolyngbya boryana (Plectonema boryanum).